The primary structure comprises 540 residues: Chaperonin GroEL (540 aa).

Residues 29–32 (TLGP), 86–90 (DGTTT), Gly-413, 476–478 (NAA), and Asp-492 each bind ATP.

Belongs to the chaperonin (HSP60) family. As to quaternary structure, forms a cylinder of 14 subunits composed of two heptameric rings stacked back-to-back. Interacts with the co-chaperonin GroES.

The protein localises to the cytoplasm. It catalyses the reaction ATP + H2O + a folded polypeptide = ADP + phosphate + an unfolded polypeptide.. In terms of biological role, together with its co-chaperonin GroES, plays an essential role in assisting protein folding. The GroEL-GroES system forms a nano-cage that allows encapsulation of the non-native substrate proteins and provides a physical environment optimized to promote and accelerate protein folding. This chain is Chaperonin GroEL, found in Streptococcus agalactiae serotype V (strain ATCC BAA-611 / 2603 V/R).